The sequence spans 194 residues: UPF0301 protein BPEN_258 (194 aa).

It belongs to the UPF0301 (AlgH) family.

This chain is UPF0301 protein BPEN_258, found in Blochmanniella pennsylvanica (strain BPEN).